The primary structure comprises 179 residues: ATP-dependent protease subunit HslV (179 aa).

Residue Thr-8 is part of the active site. Na(+)-binding residues include Gly-163, Cys-166, and Thr-169.

It belongs to the peptidase T1B family. HslV subfamily. In terms of assembly, a double ring-shaped homohexamer of HslV is capped on each side by a ring-shaped HslU homohexamer. The assembly of the HslU/HslV complex is dependent on binding of ATP.

The protein resides in the cytoplasm. It carries out the reaction ATP-dependent cleavage of peptide bonds with broad specificity.. Its activity is regulated as follows. Allosterically activated by HslU binding. Functionally, protease subunit of a proteasome-like degradation complex believed to be a general protein degrading machinery. The sequence is that of ATP-dependent protease subunit HslV from Solibacter usitatus (strain Ellin6076).